A 1506-amino-acid chain; its full sequence is ABC transporter C family member 9 (1506 aa).

The next 11 membrane-spanning stretches (helical) occupy residues 37 to 57 (MQVT…FGVV), 84 to 104 (ISLL…LLLF), 116 to 136 (VSVF…SVVV), 150 to 170 (MLRS…AHFI), 179 to 199 (FQDY…AVSI), 315 to 335 (AINA…PYLI), 350 to 370 (LNHG…ETVT), 427 to 447 (FIWY…AIYI), 452 to 472 (LGLG…CNYP), 541 to 561 (FILW…CMLM), and 567 to 587 (AGAV…IFGL). Positions 314–596 (AAINAVFAVV…LPDLLSALVQ (283 aa)) constitute an ABC transmembrane type-1 1 domain. The region spanning 630 to 853 (VEIENGAFSW…NIGFEVLVGA (224 aa)) is the ABC transporter 1 domain. 665–672 (GAVGSGKS) is an ATP binding site. The next 5 membrane-spanning stretches (helical) occupy residues 934–956 (LLVP…SNYW), 976–996 (ILLV…ARTI), 1048–1068 (MAVK…TIFV), 1167–1187 (LSHF…EGVI), and 1191–1211 (IAGL…TVIW). Positions 936–1218 (VPFIILAQSC…VIWNICNAEN (283 aa)) constitute an ABC transmembrane type-1 2 domain. The ABC transporter 2 domain maps to 1257 to 1489 (FRDLQVRYAE…EDSFFSKLIK (233 aa)). 1289–1296 (GRTGSGKS) contributes to the ATP binding site.

The protein belongs to the ABC transporter superfamily. ABCC family. Conjugate transporter (TC 3.A.1.208) subfamily. Ubiquitous.

It localises to the membrane. The catalysed reaction is ATP + H2O + xenobioticSide 1 = ADP + phosphate + xenobioticSide 2.. Pump for glutathione S-conjugates. This Arabidopsis thaliana (Mouse-ear cress) protein is ABC transporter C family member 9 (ABCC9).